Reading from the N-terminus, the 224-residue chain is Urease accessory protein UreF (224 aa).

Belongs to the UreF family. As to quaternary structure, ureD, UreF and UreG form a complex that acts as a GTP-hydrolysis-dependent molecular chaperone, activating the urease apoprotein by helping to assemble the nickel containing metallocenter of UreC. The UreE protein probably delivers the nickel.

It is found in the cytoplasm. Required for maturation of urease via the functional incorporation of the urease nickel metallocenter. In Klebsiella pneumoniae (strain 342), this protein is Urease accessory protein UreF.